A 1279-amino-acid chain; its full sequence is ATP-dependent helicase/nuclease subunit A (1279 aa).

Positions 4–499 constitute a UvrD-like helicase ATP-binding domain; it reads TKWTDEQRQA…VKLFKNFRSR (496 aa). Position 25 to 32 (25 to 32) interacts with ATP; that stretch reads AGAGAGKT. One can recognise a UvrD-like helicase C-terminal domain in the interval 526–853; that stretch reads EEALKVGASY…RIMSIHKSKG (328 aa).

This sequence belongs to the helicase family. AddA subfamily. Heterodimer of AddA and AddB/RexB. Mg(2+) is required as a cofactor.

The enzyme catalyses Couples ATP hydrolysis with the unwinding of duplex DNA by translocating in the 3'-5' direction.. It catalyses the reaction ATP + H2O = ADP + phosphate + H(+). Functionally, the heterodimer acts as both an ATP-dependent DNA helicase and an ATP-dependent, dual-direction single-stranded exonuclease. Recognizes the chi site generating a DNA molecule suitable for the initiation of homologous recombination. The AddA nuclease domain is required for chi fragment generation; this subunit has the helicase and 3' -&gt; 5' nuclease activities. This chain is ATP-dependent helicase/nuclease subunit A, found in Clostridium botulinum (strain Kyoto / Type A2).